A 1091-amino-acid polypeptide reads, in one-letter code: ATP-dependent helicase/deoxyribonuclease subunit B (1091 aa).

The protein belongs to the helicase family. AddB/RexB type 2 subfamily. In terms of assembly, heterodimer of AddA and RexB. Requires Mg(2+) as cofactor.

Functionally, the heterodimer acts as both an ATP-dependent DNA helicase and an ATP-dependent, dual-direction single-stranded exonuclease. Recognizes the chi site generating a DNA molecule suitable for the initiation of homologous recombination. This subunit has 5' -&gt; 3' nuclease activity but not helicase activity. This Streptococcus pneumoniae (strain CGSP14) protein is ATP-dependent helicase/deoxyribonuclease subunit B.